The sequence spans 248 residues: Probable transcriptional regulatory protein RPE_4771 (248 aa).

The interval 1-21 (MAGHSQFKNIMHRKGRQDAQK) is disordered.

It belongs to the TACO1 family.

The protein localises to the cytoplasm. This Rhodopseudomonas palustris (strain BisA53) protein is Probable transcriptional regulatory protein RPE_4771.